Here is a 79-residue protein sequence, read N- to C-terminus: Small ribosomal subunit protein bS18 (79 aa).

The protein belongs to the bacterial ribosomal protein bS18 family. As to quaternary structure, part of the 30S ribosomal subunit. Forms a tight heterodimer with protein bS6.

In terms of biological role, binds as a heterodimer with protein bS6 to the central domain of the 16S rRNA, where it helps stabilize the platform of the 30S subunit. This is Small ribosomal subunit protein bS18 from Enterococcus faecalis (strain ATCC 700802 / V583).